The sequence spans 586 residues: MFS-type transporter ucsD (586 aa).

Residues 1–56 form a disordered region; sequence MSRNSGTTLEDGPLHADPTTEAPNNATVTTNVTANDENTEKEVDADAAAAAPAEAP. Low complexity-rich tracts occupy residues 19–36 and 46–56; these read TTEAPNNATVTTNVTAND and DAAAAAPAEAP. N-linked (GlcNAc...) asparagine glycosylation is found at Asn25 and Asn31. Helical transmembrane passes span 65-85, 101-121, 131-151, 164-184, 192-212, 220-240, 263-283, and 290-310; these read WAIVAALAFTALLSSLEGTII, SFIWVPNGYFLATIVMLPLMA, WLTLISVATFTLGSGICGGAN, GFGGGGIALMINIILTDLVPL, GIVQMVSAVGAALGPFLGGLL, WVFYINLPIGGTSLVALFFFL, AIFIASTVSVLIGVTWGGAVY, and VIVPLVLGFFGLGLFVVYEWT. Asn324 carries N-linked (GlcNAc...) asparagine glycosylation. The next 6 membrane-spanning stretches (helical) occupy residues 330-350, 368-388, 393-413, 420-440, 458-478, and 532-552; these read VLGVTFLHTVATYWSFYFMPI, LPLFAGIFPFAILGGMLLAKF, PMHLIGMAIITLSFGLFSLLD, AWACFQLLFAVGAGLMIAILL, VWTFVRGFGTVWGVTIPSAIF, and LRTVWYVGVALAGFGWLLIWL.

Belongs to the major facilitator superfamily.

It is found in the membrane. Its function is as follows. MFS-type transporter; part of the gene cluster that mediates the biosynthesis of UCS1025A, a member of the pyrrolizidinone family that acts as a strong telomerase inhibitor and displays potent antibacterial and antitumor properties. These compounds share a hemiaminal-containing pyrrolizidinone core fused with a gamma-lactone, giving a furopyrrolizidine that is connected to a decalin fragment. The protein is MFS-type transporter ucsD of Acremonium sp.